The following is a 273-amino-acid chain: Chondrolectin (273 aa).

An N-terminal signal peptide occupies residues 1 to 21 (MSRVVSLLLGAALLCGHGAFC). The Extracellular portion of the chain corresponds to 22 to 216 (RRVVSGQKVC…VVTEAGIIPN (195 aa)). The 145-residue stretch at 35–179 (FKHPCYKMAY…CNMKHNYICK (145 aa)) folds into the C-type lectin domain. 2 disulfide bridges follow: C61/C178 and C144/C170. N86 carries N-linked (GlcNAc...) asparagine glycosylation. Residues 217–237 (LIYVVIPTIPLLLLILVAFGT) traverse the membrane as a helical segment. The Cytoplasmic portion of the chain corresponds to 238–273 (CCFQMLHKSKGRTKTSPNQSTLWISKSTRKESGMEV). The segment at 248 to 273 (GRTKTSPNQSTLWISKSTRKESGMEV) is disordered. Residues 251–263 (KTSPNQSTLWISK) show a composition bias toward polar residues.

Interacts with RABGGTB. Post-translationally, N-glycosylated. In terms of tissue distribution, found in spleen, testis, prostate and fetal liver. Expression limited to vascular muscle of testis, smooth muscle of prostate stroma, heart muscle, skeletal muscle, crypts of small intestine, and red pulp of spleen. B lymphocytes express isoform 2 only; peripheral blood T lymphocytes express isoform 3 only; granulocytes and monocytes express neither isoform 2 nor isoform 3. During development of T lymphocytes, bone marrow progenitor cells express isoform 2 only; thymocytes at different stages of maturation express predominantly isoform 2 and weakly isoform 3, and mature thymocytes express only isoform 2.

It is found in the cytoplasm. Its subcellular location is the membrane. It localises to the endoplasmic reticulum. The protein localises to the endoplasmic reticulum membrane. May play a role in the development of the nervous system such as in neurite outgrowth and elongation. May be involved in motor axon growth and guidance. The protein is Chondrolectin (CHODL) of Homo sapiens (Human).